An 860-amino-acid chain; its full sequence is Leucine--tRNA ligase (860 aa).

The short motif at 42–52 is the 'HIGH' region element; it reads PYPSGRLHMGH. The 'KMSKS' region signature appears at 619–623; it reads KMSKS. Lysine 622 lines the ATP pocket.

It belongs to the class-I aminoacyl-tRNA synthetase family.

Its subcellular location is the cytoplasm. It catalyses the reaction tRNA(Leu) + L-leucine + ATP = L-leucyl-tRNA(Leu) + AMP + diphosphate. This is Leucine--tRNA ligase from Yersinia pestis bv. Antiqua (strain Angola).